The chain runs to 78 residues: MSTIEERVKKIIIEQLGVKEDDVKSAASFVDDLGADSLDTVELVMALEEEFDTEIPDEEAEKITTVQAAIDYILSHQE.

Positions 2 to 77 constitute a Carrier domain; the sequence is STIEERVKKI…AAIDYILSHQ (76 aa). S37 carries the post-translational modification O-(pantetheine 4'-phosphoryl)serine.

This sequence belongs to the acyl carrier protein (ACP) family. In terms of processing, 4'-phosphopantetheine is transferred from CoA to a specific serine of apo-ACP by AcpS. This modification is essential for activity because fatty acids are bound in thioester linkage to the sulfhydryl of the prosthetic group.

The protein resides in the cytoplasm. The protein operates within lipid metabolism; fatty acid biosynthesis. Functionally, carrier of the growing fatty acid chain in fatty acid biosynthesis. In Tolumonas auensis (strain DSM 9187 / NBRC 110442 / TA 4), this protein is Acyl carrier protein.